The chain runs to 238 residues: 1-(5-phosphoribosyl)-5-[(5-phosphoribosylamino)methylideneamino] imidazole-4-carboxamide isomerase (238 aa).

Aspartate 8 (proton acceptor) is an active-site residue. The active-site Proton donor is the aspartate 129.

This sequence belongs to the HisA/HisF family.

The protein resides in the cytoplasm. The enzyme catalyses 1-(5-phospho-beta-D-ribosyl)-5-[(5-phospho-beta-D-ribosylamino)methylideneamino]imidazole-4-carboxamide = 5-[(5-phospho-1-deoxy-D-ribulos-1-ylimino)methylamino]-1-(5-phospho-beta-D-ribosyl)imidazole-4-carboxamide. Its pathway is amino-acid biosynthesis; L-histidine biosynthesis; L-histidine from 5-phospho-alpha-D-ribose 1-diphosphate: step 4/9. The protein is 1-(5-phosphoribosyl)-5-[(5-phosphoribosylamino)methylideneamino] imidazole-4-carboxamide isomerase of Lacticaseibacillus casei (strain BL23) (Lactobacillus casei).